We begin with the raw amino-acid sequence, 334 residues long: Ribosomal RNA small subunit methyltransferase H (334 aa).

S-adenosyl-L-methionine is bound by residues 53–55 (GGH), Asp-72, Phe-99, Asp-122, and His-129.

It belongs to the methyltransferase superfamily. RsmH family.

It is found in the cytoplasm. The catalysed reaction is cytidine(1402) in 16S rRNA + S-adenosyl-L-methionine = N(4)-methylcytidine(1402) in 16S rRNA + S-adenosyl-L-homocysteine + H(+). In terms of biological role, specifically methylates the N4 position of cytidine in position 1402 (C1402) of 16S rRNA. The sequence is that of Ribosomal RNA small subunit methyltransferase H from Leptospira interrogans serogroup Icterohaemorrhagiae serovar Lai (strain 56601).